The sequence spans 236 residues: Phosphoribosylaminoimidazole-succinocarboxamide synthase (236 aa).

This sequence belongs to the SAICAR synthetase family.

It carries out the reaction 5-amino-1-(5-phospho-D-ribosyl)imidazole-4-carboxylate + L-aspartate + ATP = (2S)-2-[5-amino-1-(5-phospho-beta-D-ribosyl)imidazole-4-carboxamido]succinate + ADP + phosphate + 2 H(+). It functions in the pathway purine metabolism; IMP biosynthesis via de novo pathway; 5-amino-1-(5-phospho-D-ribosyl)imidazole-4-carboxamide from 5-amino-1-(5-phospho-D-ribosyl)imidazole-4-carboxylate: step 1/2. In Chlorobium phaeobacteroides (strain BS1), this protein is Phosphoribosylaminoimidazole-succinocarboxamide synthase.